We begin with the raw amino-acid sequence, 460 residues long: Serine protease HTRA1 (460 aa).

An N-terminal signal peptide occupies residues 1–18 (MAMLWLAVLLTCGAPAAL). Residues 22-92 (SGVGCPSRCD…NGGVARCQCP (71 aa)) enclose the IGFBP N-terminal domain. Cystine bridges form between Cys26–Cys51, Cys30–Cys53, Cys35–Cys54, Cys42–Cys57, Cys65–Cys80, Cys74–Cys89, Cys91–Cys109, and Cys98–Cys134. Residues 74 to 136 (CASGLRCVKN…IPIQRGDCQQ (63 aa)) enclose the Kazal-like domain. A serine protease region spans residues 183–343 (GSGFIVSEDG…IPSDKIRKFL (161 aa)). Catalysis depends on charge relay system residues His199, Asp229, and Ser307. The PDZ domain occupies 344–447 (AESHNRQSTG…LHLVIRRGNE (104 aa)).

This sequence belongs to the peptidase S1C family. Forms homotrimers. In the presence of substrate, may form higher-order multimers in a PDZ-independent manner.

Its subcellular location is the cell membrane. The protein resides in the secreted. It localises to the cytoplasm. It is found in the cytosol. Serine protease with a variety of targets, including extracellular matrix proteins and proteoglycans such as biglycan, syndecan-4 and glypican-4. Through cleavage of proteoglycans, may release soluble FGF-glycosaminoglycan complexes that promote the range and intensity of FGF signals in the extracellular space. Consequently, facilitates inductive processes in the developing embryo, such as posteriorization, mesoderm induction and neuronal differentiation. Regulates the availability of insulin-like growth factors (IGFs) by cleaving IGF-binding proteins. Inhibits signaling mediated by TGF-beta family members. Consequently, may regulate many physiological processes. Intracellularly, degrades TSC2, leading to the activation of TSC2 downstream targets. The polypeptide is Serine protease HTRA1 (htra1) (Xenopus tropicalis (Western clawed frog)).